Reading from the N-terminus, the 41-residue chain is Photosystem II reaction center protein Y (41 aa).

A helical transmembrane segment spans residues Leu4–Ile22.

It belongs to the PsbY family. In terms of assembly, PSII is composed of 1 copy each of membrane proteins PsbA, PsbB, PsbC, PsbD, PsbE, PsbF, PsbH, PsbI, PsbJ, PsbK, PsbL, PsbM, PsbT, PsbX, PsbY, Psb30/Ycf12, peripheral proteins PsbO, CyanoQ (PsbQ), PsbU, PsbV and a large number of cofactors. It forms dimeric complexes.

It localises to the cellular thylakoid membrane. Functionally, loosely associated component of the core of photosystem II (PSII), it is not always seen in crystals. PSII is a light-driven water plastoquinone oxidoreductase, using light energy to abstract electrons from H(2)O, generating a proton gradient subsequently used for ATP formation. This Prochlorococcus marinus (strain MIT 9211) protein is Photosystem II reaction center protein Y.